A 214-amino-acid polypeptide reads, in one-letter code: Probable GTP-binding protein EngB (214 aa).

An EngB-type G domain is found at 24–199 (GGYEVAFAGR…RGIVGGWLGL (176 aa)). GTP contacts are provided by residues 32 to 39 (GRSNAGKS), 59 to 63 (GRTQQ), 77 to 80 (DLPG), 144 to 147 (TKAD), and 178 to 180 (YSG). Positions 39 and 61 each coordinate Mg(2+).

It belongs to the TRAFAC class TrmE-Era-EngA-EngB-Septin-like GTPase superfamily. EngB GTPase family. Mg(2+) serves as cofactor.

Necessary for normal cell division and for the maintenance of normal septation. This Xanthomonas axonopodis pv. citri (strain 306) protein is Probable GTP-binding protein EngB.